A 106-amino-acid chain; its full sequence is UPF0473 protein SSU98_0068 (106 aa).

The protein belongs to the UPF0473 family.

The polypeptide is UPF0473 protein SSU98_0068 (Streptococcus suis (strain 98HAH33)).